We begin with the raw amino-acid sequence, 160 residues long: Nucleotide-binding protein Tola_0795 (160 aa).

It belongs to the YajQ family.

In terms of biological role, nucleotide-binding protein. In Tolumonas auensis (strain DSM 9187 / NBRC 110442 / TA 4), this protein is Nucleotide-binding protein Tola_0795.